A 523-amino-acid polypeptide reads, in one-letter code: LLLLLQLSCCFSSGSCGKVLVWPMEFSHWMNMKTILDALVQRGHAVTVLRSSASILVNSNDESGITFETFPTTSTKDEMEAFFMYWLNKLTNDVSKDALWEYFQTWQKFFMEYSDNYENICKDLVLNKKIMAKLQESRFDVVLADPIAPCGELLAELLNRPLVYSVRFTPGYTYEKYSGGLLFPPSYVPVIMSDLSGQMTFMERVKNMLWMLYFDFWFQMLNVKRWDQFCSEVLGRPVTFSELVGKAEIWLIRSYWDLEFPRPLLPNSYFVGGLHCKPAQPLPKEMEEFVQSSGEEGVVVFSLGSMISNLTEERANVIASTLAQLPQKVLWKFDGKKPDNLGTNTQLYKWIPQNDLLGHTVSKAFITHGGANGVFEAIYHGIPMVGLPLFADQHDNLAHMRAKGAAIRLDWKTMSSSDFLNALKTVINDPSYKEKAMTLSRIHHDQPMKPLDQAIFWIEFVMRHKGAKHLRVAAHDLTWFQYHSLDVIGFLLACLTITTYLVIKCWLLVYQNILMTGKKKKRD.

Positions 1-16 (LLLLLQLSCCFSSGSC) are cleaved as a signal peptide. Lys-129 bears the N6-succinyllysine mark. N-linked (GlcNAc...) asparagine glycosylation occurs at Asn-309. The helical transmembrane segment at 487-503 (VIGFLLACLTITTYLVI) threads the bilayer.

The protein belongs to the UDP-glycosyltransferase family.

Its subcellular location is the microsome membrane. The protein localises to the endoplasmic reticulum membrane. It catalyses the reaction glucuronate acceptor + UDP-alpha-D-glucuronate = acceptor beta-D-glucuronoside + UDP + H(+). Functionally, UDPGT is of major importance in the conjugation and subsequent elimination of potentially toxic xenobiotics and endogenous compounds. Acts on small phenolic agents such as 2-beta-naphthol and 4-methylumbelliferone as well as bulky phenolic compounds like 2-hydroxy- and 4-hydroxybiphenyl. In contrast to 2B13 it is active toward 4-hydroxyesterone. In Oryctolagus cuniculus (Rabbit), this protein is UDP-glucuronosyltransferase 2B16 (UGT2B16).